The sequence spans 1392 residues: ATP-dependent helicase/nuclease subunit A (1392 aa).

The region spanning Asn3 to Arg489 is the UvrD-like helicase ATP-binding domain. Ala24–Thr31 lines the ATP pocket. 3 disordered regions span residues Arg291–Asp319, Arg556–Ala594, and Gly1051–Lys1126. Composition is skewed to basic and acidic residues over residues Glu305 to Asp319 and Ala569 to Glu583. Positions Arg556–Gly886 constitute a UvrD-like helicase C-terminal domain. Positions Ser584–Ala594 are enriched in acidic residues. The segment covering Ala1088–Leu1113 has biased composition (basic and acidic residues).

Belongs to the helicase family. AddA subfamily. As to quaternary structure, heterodimer of AddA and AddB/RexB. The cofactor is Mg(2+).

It carries out the reaction Couples ATP hydrolysis with the unwinding of duplex DNA by translocating in the 3'-5' direction.. It catalyses the reaction ATP + H2O = ADP + phosphate + H(+). In terms of biological role, the heterodimer acts as both an ATP-dependent DNA helicase and an ATP-dependent, dual-direction single-stranded exonuclease. Recognizes the chi site generating a DNA molecule suitable for the initiation of homologous recombination. The AddA nuclease domain is required for chi fragment generation; this subunit has the helicase and 3' -&gt; 5' nuclease activities. This Desulfitobacterium hafniense (strain Y51) protein is ATP-dependent helicase/nuclease subunit A.